The chain runs to 108 residues: Ig kappa chain V-V region HP 123E6 (108 aa).

The interval 1-23 is framework-1; the sequence is DIQMTQSTSSLSASLGDRVTISC. Cys23 and Cys88 are joined by a disulfide. The tract at residues 24–34 is complementarity-determining-1; sequence RASQDISNYLN. Residues 35-49 are framework-2; it reads WYQQKPDGTVKLLIY. Positions 50 to 56 are complementarity-determining-2; sequence YTSRLHS. The interval 57 to 88 is framework-3; that stretch reads GVPSRFSGSGSGTDYSLTISNLEQEDIATYFC. The complementarity-determining-3 stretch occupies residues 89 to 97; sequence QQGYMLPRT. The interval 98-108 is framework-4; it reads FGGGTKLEIKR.

The polypeptide is Ig kappa chain V-V region HP 123E6 (Mus musculus (Mouse)).